The primary structure comprises 66 residues: Large ribosomal subunit protein bL35 (66 aa).

This sequence belongs to the bacterial ribosomal protein bL35 family.

This chain is Large ribosomal subunit protein bL35, found in Acholeplasma laidlawii (strain PG-8A).